Here is a 90-residue protein sequence, read N- to C-terminus: Probable Fe(2+)-trafficking protein (90 aa).

This sequence belongs to the Fe(2+)-trafficking protein family.

Could be a mediator in iron transactions between iron acquisition and iron-requiring processes, such as synthesis and/or repair of Fe-S clusters in biosynthetic enzymes. The chain is Probable Fe(2+)-trafficking protein from Variovorax paradoxus (strain S110).